The sequence spans 243 residues: Probable transcriptional regulatory protein PTH_1024 (243 aa).

Belongs to the TACO1 family.

The protein resides in the cytoplasm. This is Probable transcriptional regulatory protein PTH_1024 from Pelotomaculum thermopropionicum (strain DSM 13744 / JCM 10971 / SI).